The primary structure comprises 894 residues: Phosphoenolpyruvate carboxylase (894 aa).

Catalysis depends on residues His-143 and Lys-556.

Belongs to the PEPCase type 1 family. It depends on Mg(2+) as a cofactor.

It catalyses the reaction oxaloacetate + phosphate = phosphoenolpyruvate + hydrogencarbonate. Functionally, forms oxaloacetate, a four-carbon dicarboxylic acid source for the tricarboxylic acid cycle. This Acinetobacter baylyi (strain ATCC 33305 / BD413 / ADP1) protein is Phosphoenolpyruvate carboxylase.